Consider the following 259-residue polypeptide: Protein-tyrosine phosphatase RolB (259 aa).

Residues 219–259 (GISRPAASSPEPDLTLRLSGPDQEGEEGVMKPAAVNLKKEA) are disordered.

The enzyme catalyses O-phospho-L-tyrosyl-[protein] + H2O = L-tyrosyl-[protein] + phosphate. Functionally, induces differentiation and growth of neoplastic roots (hairy roots). Seems to function as a tyrosine phosphatase. In Rhizobium rhizogenes (Agrobacterium rhizogenes), this protein is Protein-tyrosine phosphatase RolB (rolB).